The following is a 253-amino-acid chain: 5'-nucleotidase SurE (253 aa).

A divalent metal cation contacts are provided by aspartate 8, aspartate 9, serine 39, and asparagine 92.

It belongs to the SurE nucleotidase family. The cofactor is a divalent metal cation.

It localises to the cytoplasm. It catalyses the reaction a ribonucleoside 5'-phosphate + H2O = a ribonucleoside + phosphate. Functionally, nucleotidase that shows phosphatase activity on nucleoside 5'-monophosphates. The protein is 5'-nucleotidase SurE of Burkholderia mallei (strain NCTC 10247).